We begin with the raw amino-acid sequence, 133 residues long: uncharacterized protein (133 aa).

Residues 11–31 (YFLISVFLIFIVSGITYFYST) traverse the membrane as a helical segment.

The protein localises to the membrane. This is an uncharacterized protein from Borreliella burgdorferi (strain ATCC 35210 / DSM 4680 / CIP 102532 / B31) (Borrelia burgdorferi).